Here is a 163-residue protein sequence, read N- to C-terminus: Cyclic pyranopterin monophosphate synthase (163 aa).

Residues 79 to 81 and 118 to 119 each bind substrate; these read LCH and ME. Asp133 is an active-site residue.

It belongs to the MoaC family. Homohexamer; trimer of dimers.

It catalyses the reaction (8S)-3',8-cyclo-7,8-dihydroguanosine 5'-triphosphate = cyclic pyranopterin phosphate + diphosphate. It functions in the pathway cofactor biosynthesis; molybdopterin biosynthesis. Functionally, catalyzes the conversion of (8S)-3',8-cyclo-7,8-dihydroguanosine 5'-triphosphate to cyclic pyranopterin monophosphate (cPMP). This Nocardioides sp. (strain ATCC BAA-499 / JS614) protein is Cyclic pyranopterin monophosphate synthase.